Reading from the N-terminus, the 351-residue chain is Soluble interferon alpha/beta receptor OPG204 (351 aa).

An N-terminal signal peptide occupies residues 1-23 (MKMKMMVRIYFVSLSLLLFHSYA). Ig-like C2-type domains follow at residues 65–137 (LGEP…KNGD) and 155–237 (PKTY…IVVS). Disulfide bonds link C73-C129 and C172-C221. N117, N182, N261, N269, and N321 each carry an N-linked (GlcNAc...) asparagine; by host glycan. An Ig-like V-type domain is found at 246 to 345 (PSQDHRFKLI…HNYYFDKTLT (100 aa)). C272 and C333 are oxidised to a cystine.

It belongs to the interleukin-1 receptor family. In terms of assembly, interacts with host IFNA1.

The protein localises to the secreted. Counteracts the antiviral effects of host IFN-alpha/beta and key IFN-inducible proteins involved in viral RNA degradation suxh as host OAS1. Acts as a soluble IFN-alpha receptor and thus inhibits the interaction between host IFN-alpha and its receptor. The protein is Soluble interferon alpha/beta receptor OPG204 (OPG204) of Cynomys gunnisoni (Gunnison's prairie dog).